A 551-amino-acid chain; its full sequence is Glucans biosynthesis protein D (551 aa).

Positions 1–32 (MDRRRFIKGSMAMAAVCGTSGIASLFSQAAFA) form a signal peptide, tat-type signal.

Belongs to the OpgD/OpgG family. Post-translationally, predicted to be exported by the Tat system. The position of the signal peptide cleavage has not been experimentally proven.

It is found in the periplasm. Its pathway is glycan metabolism; osmoregulated periplasmic glucan (OPG) biosynthesis. Probably involved in the control of the structural glucose backbone of osmoregulated periplasmic glucans (OPGs). This Shigella dysenteriae serotype 1 (strain Sd197) protein is Glucans biosynthesis protein D.